A 497-amino-acid polypeptide reads, in one-letter code: Long chain base biosynthesis protein 2c (497 aa).

Residues 4 to 24 traverse the membrane as a helical segment; sequence VPFVTAVTTVFSYGVIFGFGH. K319 is modified (N6-(pyridoxal phosphate)lysine).

It belongs to the class-II pyridoxal-phosphate-dependent aminotransferase family. Heterodimer with LCB1. Component of the serine palmitoyltransferase (SPT) complex, composed of LCB1 and LCB2. The cofactor is pyridoxal 5'-phosphate.

It is found in the endoplasmic reticulum membrane. The enzyme catalyses L-serine + hexadecanoyl-CoA + H(+) = 3-oxosphinganine + CO2 + CoA. It participates in lipid metabolism; sphingolipid metabolism. Serine palmitoyltransferase (SPT). The heterodimer formed with LCB1 constitutes the catalytic core. This Oryza sativa subsp. japonica (Rice) protein is Long chain base biosynthesis protein 2c.